The following is a 264-amino-acid chain: Teichoic acids export ATP-binding protein TagH (264 aa).

An ABC transporter domain is found at 24–243; that stretch reads IKDALIPKNK…YEAFLKTFKK (220 aa). ATP is bound at residue 57–64; that stretch reads GINGSGKS.

The protein belongs to the ABC transporter superfamily. Teichoic acids exporter (TC 3.A.1.104.1) family. The complex is composed of two ATP-binding proteins (TagH) and two transmembrane proteins (TagG).

It is found in the cell membrane. The enzyme catalyses ATP + H2O + teichoic acidSide 1 = ADP + phosphate + teichoic acidSide 2.. In terms of biological role, part of the ABC transporter complex TagGH involved in teichoic acids export. Responsible for energy coupling to the transport system. The protein is Teichoic acids export ATP-binding protein TagH of Staphylococcus epidermidis (strain ATCC 35984 / DSM 28319 / BCRC 17069 / CCUG 31568 / BM 3577 / RP62A).